Reading from the N-terminus, the 194-residue chain is Naphthalene 1,2-dioxygenase system, small oxygenase component (194 aa).

It belongs to the bacterial ring-hydroxylating dioxygenase beta subunit family. As to quaternary structure, the naphthalene dioxygenase (NDO) multicomponent enzyme system is composed of an electron transfer component and a dioxygenase component (iron sulfur protein (ISP)). The electron transfer component is composed of a ferredoxin reductase (NagAa) and a ferredoxin (NagAb), and the dioxygenase component is formed by a large alpha subunit (NagAc) and a small beta subunit (NagAd).

It functions in the pathway aromatic compound metabolism; naphthalene degradation. In terms of biological role, component of the naphthalene dioxygenase (NDO) multicomponent enzyme system which catalyzes the incorporation of both atoms of molecular oxygen into naphthalene to form cis-(1R,2S)-dihydroxy-1,2-dihydronaphthalene. Also able to use styrene as substrate. The beta subunit seems to have a structural role in the holoenzyme. This chain is Naphthalene 1,2-dioxygenase system, small oxygenase component, found in Ralstonia sp.